Here is a 949-residue protein sequence, read N- to C-terminus: MAM domain-containing glycosylphosphatidylinositol anchor protein 2 (949 aa).

The signal sequence occupies residues M1–A25. 2 Ig-like domains span residues P27 to D127 and P134 to S232. Cystine bridges form between C62/C110 and C159/C216. Residues N92, N213, and N237 are each glycosylated (N-linked (GlcNAc...) asparagine). 4 Ig-like domains span residues P242–V328, P340–S436, P442–Q533, and P540–T627. 2 disulfide bridges follow: C264/C310 and C359/C417. N-linked (GlcNAc...) asparagine glycans are attached at residues N434, N443, N504, N610, and N703. 2 disulfides stabilise this stretch: C465–C515 and C561–C611. The Fibronectin type-III domain maps to D638–E738. The 176-residue stretch at F739–K914 folds into the MAM domain. The GPI-anchor amidated aspartate moiety is linked to residue D924. Residues G925–R949 constitute a propeptide, removed in mature form.

As to quaternary structure, interacts (through the Ig-like domains) with NLGN2.

The protein resides in the cell membrane. In terms of biological role, may be involved in cell-cell interactions. The chain is MAM domain-containing glycosylphosphatidylinositol anchor protein 2 (Mdga2) from Mus musculus (Mouse).